The primary structure comprises 122 residues: Small ribosomal subunit protein uS13 (122 aa).

The segment at 95–122 (GLPVHGQRTHTNARTRKGPRKGAVGKKK) is disordered.

It belongs to the universal ribosomal protein uS13 family. As to quaternary structure, part of the 30S ribosomal subunit. Forms a loose heterodimer with protein S19. Forms two bridges to the 50S subunit in the 70S ribosome.

Its function is as follows. Located at the top of the head of the 30S subunit, it contacts several helices of the 16S rRNA. In the 70S ribosome it contacts the 23S rRNA (bridge B1a) and protein L5 of the 50S subunit (bridge B1b), connecting the 2 subunits; these bridges are implicated in subunit movement. Contacts the tRNAs in the A and P-sites. The protein is Small ribosomal subunit protein uS13 of Lawsonia intracellularis (strain PHE/MN1-00).